The sequence spans 399 residues: Dual-specificity RNA methyltransferase RlmN (399 aa).

Glu-116 acts as the Proton acceptor in catalysis. The Radical SAM core domain occupies 122–352 (SEDRLTLCIS…VLLRRSMGRD (231 aa)). A disulfide bond links Cys-129 and Cys-357. Residues Cys-136, Cys-140, and Cys-143 each coordinate [4Fe-4S] cluster. Residues 185–186 (GE), Ser-217, 238–240 (SLN), and Asn-314 contribute to the S-adenosyl-L-methionine site. Cys-357 acts as the S-methylcysteine intermediate in catalysis.

Belongs to the radical SAM superfamily. RlmN family. [4Fe-4S] cluster is required as a cofactor.

Its subcellular location is the cytoplasm. It catalyses the reaction adenosine(2503) in 23S rRNA + 2 reduced [2Fe-2S]-[ferredoxin] + 2 S-adenosyl-L-methionine = 2-methyladenosine(2503) in 23S rRNA + 5'-deoxyadenosine + L-methionine + 2 oxidized [2Fe-2S]-[ferredoxin] + S-adenosyl-L-homocysteine. It carries out the reaction adenosine(37) in tRNA + 2 reduced [2Fe-2S]-[ferredoxin] + 2 S-adenosyl-L-methionine = 2-methyladenosine(37) in tRNA + 5'-deoxyadenosine + L-methionine + 2 oxidized [2Fe-2S]-[ferredoxin] + S-adenosyl-L-homocysteine. Its function is as follows. Specifically methylates position 2 of adenine 2503 in 23S rRNA and position 2 of adenine 37 in tRNAs. m2A2503 modification seems to play a crucial role in the proofreading step occurring at the peptidyl transferase center and thus would serve to optimize ribosomal fidelity. The sequence is that of Dual-specificity RNA methyltransferase RlmN from Bdellovibrio bacteriovorus (strain ATCC 15356 / DSM 50701 / NCIMB 9529 / HD100).